The following is a 131-amino-acid chain: M-zodatoxin-Lt8m (131 aa).

The first 20 residues, 1-20 (MKYFVVALALVAAFACIAES), serve as a signal peptide directing secretion. A propeptide spanning residues 21-60 (KPAESEHELAEVEEENELADLEDAVWLEHLADLSDLEEAR) is cleaved from the precursor.

It belongs to the cationic peptide 06 (cytoinsectotoxin) family. Expressed by the venom gland.

It is found in the secreted. Its function is as follows. Insecticidal, cytolytic and antimicrobial peptide. Forms voltage-dependent, ion-permeable channels in membranes. At high concentration causes cell membrane lysis. This is M-zodatoxin-Lt8m (cit 1-13) from Lachesana tarabaevi (Spider).